Here is a 191-residue protein sequence, read N- to C-terminus: Adenine phosphoribosyltransferase (191 aa).

The protein belongs to the purine/pyrimidine phosphoribosyltransferase family. As to quaternary structure, homodimer.

Its subcellular location is the cytoplasm. The catalysed reaction is AMP + diphosphate = 5-phospho-alpha-D-ribose 1-diphosphate + adenine. The protein operates within purine metabolism; AMP biosynthesis via salvage pathway; AMP from adenine: step 1/1. Functionally, catalyzes a salvage reaction resulting in the formation of AMP, that is energically less costly than de novo synthesis. The sequence is that of Adenine phosphoribosyltransferase from Clavibacter sepedonicus (Clavibacter michiganensis subsp. sepedonicus).